Reading from the N-terminus, the 281-residue chain is Probable endonuclease 4 (281 aa).

Residues histidine 67, histidine 107, glutamate 142, aspartate 176, histidine 179, histidine 211, aspartate 224, histidine 226, and glutamate 256 each coordinate Zn(2+).

Belongs to the AP endonuclease 2 family. Zn(2+) serves as cofactor.

The catalysed reaction is Endonucleolytic cleavage to 5'-phosphooligonucleotide end-products.. In terms of biological role, endonuclease IV plays a role in DNA repair. It cleaves phosphodiester bonds at apurinic or apyrimidinic (AP) sites, generating a 3'-hydroxyl group and a 5'-terminal sugar phosphate. The chain is Probable endonuclease 4 from Alkaliphilus oremlandii (strain OhILAs) (Clostridium oremlandii (strain OhILAs)).